A 259-amino-acid chain; its full sequence is Triosephosphate isomerase (259 aa).

Substrate is bound at residue 10 to 12 (NWK). The active-site Electrophile is the H102. The active-site Proton acceptor is the E172. Substrate is bound by residues G178, S218, and 239-240 (GG).

Belongs to the triosephosphate isomerase family. As to quaternary structure, homodimer.

Its subcellular location is the cytoplasm. It carries out the reaction D-glyceraldehyde 3-phosphate = dihydroxyacetone phosphate. Its pathway is carbohydrate biosynthesis; gluconeogenesis. It participates in carbohydrate degradation; glycolysis; D-glyceraldehyde 3-phosphate from glycerone phosphate: step 1/1. In terms of biological role, involved in the gluconeogenesis. Catalyzes stereospecifically the conversion of dihydroxyacetone phosphate (DHAP) to D-glyceraldehyde-3-phosphate (G3P). This is Triosephosphate isomerase from Leifsonia xyli subsp. xyli (strain CTCB07).